Reading from the N-terminus, the 588-residue chain is Glycoprotein (588 aa).

The signal sequence occupies residues 1–22 (MSILVIILILPILFGEVPPVNS). Residues 23–547 (GRVVDLNRNV…TTLEEEVKHG (525 aa)) lie on the Virion surface side of the membrane. Residues 548-568 (VIIVFFTVIGLIIAVPTLKML) form a helical membrane-spanning segment. Topologically, residues 569 to 588 (LKGRRPYEPVKSPVVWGGPR) are intravirion.

This sequence belongs to the nucleorhabdovirus glycoprotein family. In terms of assembly, homotrimer. Interacts with matrix protein. Post-translationally, glycosylated by host. Glycosylation is crucial for glycoprotein export at the cell surface.

It is found in the virion membrane. Its function is as follows. Attaches the virus to host cellular receptor, inducing endocytosis of the virion. In the endosome, the acidic pH induces conformational changes in the glycoprotein trimer, which trigger fusion between virus and cell membrane. The sequence is that of Glycoprotein (G) from Taro vein chlorosis virus (TAVCV).